The sequence spans 743 residues: Serine/threonine-protein kinase GD17699 (743 aa).

A disordered region spans residues 54–78; it reads NVQEDNSYNRDCDSPVSSSSEPEKE. 2 consecutive Doublecortin domains span residues 154–240 and 309–392; these read LRIK…VEYN and RIVT…AEDF. A Protein kinase domain is found at 473–731; it reads YTLGRIIGDG…SEDILDHPWT (259 aa). ATP is bound by residues 479-487 and K502; that span reads IGDGNFAIV. D594 (proton acceptor) is an active-site residue.

This sequence belongs to the protein kinase superfamily. CAMK Ser/Thr protein kinase family. CaMK subfamily.

The enzyme catalyses L-seryl-[protein] + ATP = O-phospho-L-seryl-[protein] + ADP + H(+). It catalyses the reaction L-threonyl-[protein] + ATP = O-phospho-L-threonyl-[protein] + ADP + H(+). This is Serine/threonine-protein kinase GD17699 from Drosophila simulans (Fruit fly).